The chain runs to 239 residues: ATP synthase subunit a, chloroplastic (239 aa).

Transmembrane regions (helical) follow at residues 30 to 50 (VLLV…LGTF), 87 to 107 (VPFI…GALV), 126 to 146 (INTT…AGLS), 191 to 211 (LVVA…VMVL), and 212 to 232 (GLFA…SYIG).

It belongs to the ATPase A chain family. In terms of assembly, F-type ATPases have 2 components, CF(1) - the catalytic core - and CF(0) - the membrane proton channel. CF(1) has five subunits: alpha(3), beta(3), gamma(1), delta(1), epsilon(1). CF(0) has four main subunits: a, b, b' and c.

It is found in the plastid. The protein resides in the chloroplast thylakoid membrane. Its function is as follows. Key component of the proton channel; it plays a direct role in the translocation of protons across the membrane. The protein is ATP synthase subunit a, chloroplastic of Cyanidium caldarium (Red alga).